Reading from the N-terminus, the 45-residue chain is Large ribosomal subunit protein bL34 (45 aa).

The interval M1 to T27 is disordered. Residues S10–T27 are compositionally biased toward basic residues.

Belongs to the bacterial ribosomal protein bL34 family.

This chain is Large ribosomal subunit protein bL34, found in Prochlorococcus marinus (strain MIT 9211).